A 76-amino-acid chain; its full sequence is Kappa-actitoxin-Avd4c (76 aa).

Residues 1 to 19 (MNKALFLCLVVLCAAVVFA) form the signal peptide. Positions 20–31 (AEDLQKAKHAPF) are excised as a propeptide. 3 disulfides stabilise this stretch: Cys-37/Cys-72, Cys-39/Cys-65, and Cys-55/Cys-73.

Belongs to the sea anemone type 3 (BDS) potassium channel toxin family. As to expression, moderately expressed in the ectodermal tissue from the distal and proximal tentacles, body wall, and oral disk.

Its subcellular location is the secreted. It localises to the nematocyst. In terms of biological role, blocks Kv3 voltage-gated potassium channels. Reduces blood pressure. The polypeptide is Kappa-actitoxin-Avd4c (Anemonia viridis (Snakelocks anemone)).